We begin with the raw amino-acid sequence, 188 residues long: Elongation factor P (188 aa).

It belongs to the elongation factor P family.

The protein resides in the cytoplasm. Its pathway is protein biosynthesis; polypeptide chain elongation. In terms of biological role, involved in peptide bond synthesis. Stimulates efficient translation and peptide-bond synthesis on native or reconstituted 70S ribosomes in vitro. Probably functions indirectly by altering the affinity of the ribosome for aminoacyl-tRNA, thus increasing their reactivity as acceptors for peptidyl transferase. This Rhodopseudomonas palustris (strain BisB5) protein is Elongation factor P.